Here is a 198-residue protein sequence, read N- to C-terminus: Recombination protein RecR (198 aa).

The C4-type zinc finger occupies 58-73 (CSICGNYTDSDPCAIC). The Toprim domain maps to 81-175 (SIICVIEQPK…KVTRIAHGVP (95 aa)).

The protein belongs to the RecR family.

Functionally, may play a role in DNA repair. It seems to be involved in an RecBC-independent recombinational process of DNA repair. It may act with RecF and RecO. This is Recombination protein RecR from Clostridium novyi (strain NT).